The sequence spans 438 residues: GTPase Der (438 aa).

2 consecutive EngA-type G domains span residues 4-168 (PIVA…NDPS) and 177-352 (IRIA…DNYS). Residues 10 to 17 (GRPNVGKS), 57 to 61 (DTGGI), 120 to 123 (NKID), 183 to 190 (GKPNVGKS), 230 to 234 (DTAGL), and 295 to 298 (NKWD) each bind GTP. The KH-like domain occupies 353-437 (KRVSTGLLND…GIEIEYRARK (85 aa)).

It belongs to the TRAFAC class TrmE-Era-EngA-EngB-Septin-like GTPase superfamily. EngA (Der) GTPase family. Associates with the 50S ribosomal subunit.

Functionally, GTPase that plays an essential role in the late steps of ribosome biogenesis. The polypeptide is GTPase Der (Clostridium perfringens (strain ATCC 13124 / DSM 756 / JCM 1290 / NCIMB 6125 / NCTC 8237 / Type A)).